A 346-amino-acid polypeptide reads, in one-letter code: Histidinol-phosphate aminotransferase (346 aa).

Lysine 209 is modified (N6-(pyridoxal phosphate)lysine).

It belongs to the class-II pyridoxal-phosphate-dependent aminotransferase family. Histidinol-phosphate aminotransferase subfamily. As to quaternary structure, homodimer. The cofactor is pyridoxal 5'-phosphate.

The catalysed reaction is L-histidinol phosphate + 2-oxoglutarate = 3-(imidazol-4-yl)-2-oxopropyl phosphate + L-glutamate. The protein operates within amino-acid biosynthesis; L-histidine biosynthesis; L-histidine from 5-phospho-alpha-D-ribose 1-diphosphate: step 7/9. The sequence is that of Histidinol-phosphate aminotransferase from Vibrio cholerae serotype O1 (strain ATCC 39541 / Classical Ogawa 395 / O395).